A 398-amino-acid polypeptide reads, in one-letter code: Putative F-box protein At3g17620 (398 aa).

One can recognise an F-box domain in the interval 1 to 45 (MMSDLPRDLLEERLSRVPVKSLREARFTCKNWKTLSKKRSFTKKH).

This Arabidopsis thaliana (Mouse-ear cress) protein is Putative F-box protein At3g17620.